Reading from the N-terminus, the 166-residue chain is Signal peptidase complex catalytic subunit SEC11 (166 aa).

The Cytoplasmic segment spans residues 1-9 (MNIRQQLTQ). The chain crosses the membrane as a helical; Signal-anchor for type II membrane protein span at residues 10–30 (LLTLGYVFASAFMLWKTLSVV). Over 31–166 (ANLHSPIVVV…LGLSSLFSNE (136 aa)) the chain is Lumenal. Active-site charge relay system residues include S44, H83, and D108. Residues 152–163 (GLLGLLGLSSLF) form a C-terminal short (CTS) helix region.

It belongs to the peptidase S26B family. In terms of assembly, component of the signal peptidase complex (SPC) composed of a catalytic subunit SEC11 and three accessory subunits SPC1, SPC2 and SPC3. The complex induces a local thinning of the ER membrane which is used to measure the length of the signal peptide (SP) h-region of protein substrates. This ensures the selectivity of the complex towards h-regions shorter than 18-20 amino acids. SPC associates with the translocon complex.

Its subcellular location is the endoplasmic reticulum membrane. It carries out the reaction Cleavage of hydrophobic, N-terminal signal or leader sequences from secreted and periplasmic proteins.. Functionally, catalytic component of the signal peptidase complex (SPC) which catalyzes the cleavage of N-terminal signal sequences from nascent proteins as they are translocated into the lumen of the endoplasmic reticulum. Specifically cleaves N-terminal signal peptides that contain a hydrophobic alpha-helix (h-region) shorter than 18-20 amino acids. This Lodderomyces elongisporus (strain ATCC 11503 / CBS 2605 / JCM 1781 / NBRC 1676 / NRRL YB-4239) (Yeast) protein is Signal peptidase complex catalytic subunit SEC11 (SEC11).